The following is a 143-amino-acid chain: ATP synthase subunit b', chloroplastic (143 aa).

Residues leucine 12–tyrosine 31 form a helical membrane-spanning segment.

Belongs to the ATPase B chain family. As to quaternary structure, F-type ATPases have 2 components, F(1) - the catalytic core - and F(0) - the membrane proton channel. F(1) has five subunits: alpha(3), beta(3), gamma(1), delta(1), epsilon(1). F(0) has four main subunits: a(1), b(1), b'(1) and c(10-14). The alpha and beta chains form an alternating ring which encloses part of the gamma chain. F(1) is attached to F(0) by a central stalk formed by the gamma and epsilon chains, while a peripheral stalk is formed by the delta, b and b' chains.

Its subcellular location is the plastid. The protein localises to the chloroplast thylakoid membrane. In terms of biological role, f(1)F(0) ATP synthase produces ATP from ADP in the presence of a proton or sodium gradient. F-type ATPases consist of two structural domains, F(1) containing the extramembraneous catalytic core and F(0) containing the membrane proton channel, linked together by a central stalk and a peripheral stalk. During catalysis, ATP synthesis in the catalytic domain of F(1) is coupled via a rotary mechanism of the central stalk subunits to proton translocation. Functionally, component of the F(0) channel, it forms part of the peripheral stalk, linking F(1) to F(0). The b'-subunit is a diverged and duplicated form of b found in plants and photosynthetic bacteria. The chain is ATP synthase subunit b', chloroplastic from Cyanidioschyzon merolae (strain NIES-3377 / 10D) (Unicellular red alga).